Consider the following 504-residue polypeptide: UNC93-like protein C922.05c (504 aa).

The next 11 helical transmembrane spans lie at 64 to 84, 97 to 116, 123 to 145, 149 to 169, 186 to 206, 219 to 239, 275 to 293, 310 to 330, 343 to 363, 391 to 411, and 452 to 472; these read IIVSWVCFLCPGMFNALSGLG, ANVALYSTFAGLGFFAGSIC, LTLAIGGTGYSVYTASLLCYKHV, GFVIFGGCYLGLTAGMLWAAQ, IAIFWGIFNLGAVIGSIVPLA, GTYAGFIVLMAVGSALALFMV, YWVLLLFPMFFSSNWFTTY, LNNLLYWFAQIMGSAVAALFL, VGWGLVFVLICVIWGGGLAFQ, FLYIFYGMLDAIFQSYAYWII, and YFASCWALLCGSLIVASPVIW.

The protein belongs to the unc-93 family.

It is found in the cytoplasm. Its subcellular location is the membrane. This is UNC93-like protein C922.05c from Schizosaccharomyces pombe (strain 972 / ATCC 24843) (Fission yeast).